Here is an 86-residue protein sequence, read N- to C-terminus: Cell division topological specificity factor (86 aa).

This sequence belongs to the MinE family.

In terms of biological role, prevents the cell division inhibition by proteins MinC and MinD at internal division sites while permitting inhibition at polar sites. This ensures cell division at the proper site by restricting the formation of a division septum at the midpoint of the long axis of the cell. This chain is Cell division topological specificity factor, found in Stenotrophomonas maltophilia (strain K279a).